The following is a 115-amino-acid chain: U3-lycotoxin-Ls1a (115 aa).

Residues 1–20 (MKFVLLFGVFLVTLFSYSSA) form the signal peptide. Positions 21–44 (EMLDDFDQAAEDELLSLIEKEEAR) are excised as a propeptide. Cystine bridges form between Cys48-Cys63, Cys55-Cys72, Cys62-Cys87, and Cys74-Cys85.

The protein belongs to the neurotoxin 19 (CSTX) family. 01 subfamily. Expressed by the venom gland.

It localises to the secreted. This Lycosa singoriensis (Wolf spider) protein is U3-lycotoxin-Ls1a.